Consider the following 270-residue polypeptide: Putative phosphoenolpyruvate synthase regulatory protein (270 aa).

150–157 lines the ADP pocket; sequence GVSRCGKT.

This sequence belongs to the pyruvate, phosphate/water dikinase regulatory protein family. PSRP subfamily.

The enzyme catalyses [pyruvate, water dikinase] + ADP = [pyruvate, water dikinase]-phosphate + AMP + H(+). It catalyses the reaction [pyruvate, water dikinase]-phosphate + phosphate + H(+) = [pyruvate, water dikinase] + diphosphate. Its function is as follows. Bifunctional serine/threonine kinase and phosphorylase involved in the regulation of the phosphoenolpyruvate synthase (PEPS) by catalyzing its phosphorylation/dephosphorylation. The protein is Putative phosphoenolpyruvate synthase regulatory protein of Shewanella oneidensis (strain ATCC 700550 / JCM 31522 / CIP 106686 / LMG 19005 / NCIMB 14063 / MR-1).